The sequence spans 555 residues: Solute carrier family 22 member 2 (555 aa).

Residues 1-22 (MPTTVDDVLEHGGEFHFFQKQM) lie on the Cytoplasmic side of the membrane. A helical membrane pass occupies residues 23 to 43 (FFLLALLSATFAPIYVGIVFL). Topologically, residues 44–150 (GFTPDHRCRS…LVCANSWMLD (107 aa)) are extracellular. Residue Asn-72 is glycosylated (N-linked (GlcNAc...) asparagine). The helical transmembrane segment at 151–171 (LFQSSVNVGFFIGSMSIGYIA) threads the bilayer. At 172 to 177 (DRFGRK) the chain is on the cytoplasmic side. A helical membrane pass occupies residues 178–198 (LCLLTTVLINAAAGVLMAISP). Residues 199–208 (TYTWMLIFRL) lie on the Extracellular side of the membrane. The helical transmembrane segment at 209–229 (IQGLVSKAGWLIGYILITEFV) threads the bilayer. The Cytoplasmic portion of the chain corresponds to 230-238 (GRRYRRTVG). A helical membrane pass occupies residues 239-259 (IFYQVAYTVGLLVLAGVAYAL). Residues 260-263 (PHWR) lie on the Extracellular side of the membrane. The helical transmembrane segment at 264–284 (WLQFTVSLPNFFFLLYYWCIP) threads the bilayer. Residues 284 to 288 (PESPR) carry the Proline-rich sequence motif. The Cytoplasmic segment spans residues 285–348 (ESPRWLISQN…VRTPQIRKHT (64 aa)). Residues 349-369 (MILMYNWFTSSVLYQGLIMHM) traverse the membrane as a helical segment. Over 370 to 375 (GLAGDN) the chain is Extracellular. The chain crosses the membrane as a helical span at residues 376-396 (IYLDFFYSALVEFPAAFMIIL). Topologically, residues 397-414 (TIDRIGRRYPWAASNMVA) are cytoplasmic. Residues 415–435 (GAACLASVFIPGDLQWLKIII) traverse the membrane as a helical segment. Topologically, residues 436 to 441 (SCLGRM) are extracellular. A helical transmembrane segment spans residues 442-462 (GITMAYEIVCLVNAELYPTFI). At 463-464 (RN) the chain is on the cytoplasmic side. Residues 465 to 485 (LGVHICSSMCDIGGIITPFLV) form a helical membrane-spanning segment. The Extracellular segment spans residues 486-494 (YRLTNIWLE). A helical membrane pass occupies residues 495 to 515 (LPLMVFGVLGLVAGGLVLLLP). Residues 516–555 (ETKGKALPETIEEAENMQRPRKNKEKMIYLQVQKLDIPLN) are Cytoplasmic-facing.

This sequence belongs to the major facilitator (TC 2.A.1) superfamily. Organic cation transporter (TC 2.A.1.19) family. In terms of processing, tyrosine phosphorylated by tyrosine-protein kinase YES1. Mainly expressed in kidney, in the cortex and medulla. Localized in testis, mostly to peritubular myoid cells and Leydig cells and also detected along the basal membrane of Sertoli cells. Expressed in brain, in neurons of the cerebral cortex and in various subcortical nuclei. In the brain, also detected in the dopaminergic regions of the substantia nigra. Expressed in tracheal and bronchial ciliated epithelium in the respiratory tract. Also detected in secretory phase endometrium, in scattered stromal cells. Expressed in spleen, placenta, small intestine and spinal cord. Weakly expressed in prostate, uterus and lung. In terms of tissue distribution, mainly expressed in kidney, bone marrow and testis. Expressed in colon, skeletal muscle, spinal cord, placenta and liver.

The protein resides in the basolateral cell membrane. The protein localises to the basal cell membrane. It is found in the apical cell membrane. It catalyses the reaction (R)-noradrenaline(out) = (R)-noradrenaline(in). The catalysed reaction is (R)-adrenaline(out) = (R)-adrenaline(in). It carries out the reaction serotonin(out) = serotonin(in). The enzyme catalyses dopamine(out) = dopamine(in). It catalyses the reaction histamine(out) = histamine(in). The catalysed reaction is thiamine(in) = thiamine(out). It carries out the reaction creatinine(in) = creatinine(out). The enzyme catalyses 1-methylnicotinamide(out) = 1-methylnicotinamide(in). It catalyses the reaction guanidine(out) = guanidine(in). The catalysed reaction is choline(out) = choline(in). It carries out the reaction agmatine(out) = agmatine(in). The enzyme catalyses putrescine(out) = putrescine(in). It catalyses the reaction spermidine(in) = spermidine(out). The catalysed reaction is tyramine(in) = tyramine(out). It carries out the reaction L-histidyl-L-proline diketopiperazine(in) = L-histidyl-L-proline diketopiperazine(out). The enzyme catalyses (R)-salsolinol(in) = (R)-salsolinol(out). It catalyses the reaction N-methyl-(R)-salsolinol(in) = N-methyl-(R)-salsolinol(out). The catalysed reaction is acetylcholine(in) = acetylcholine(out). It carries out the reaction prostaglandin F2alpha(out) = prostaglandin F2alpha(in). The enzyme catalyses prostaglandin E2(out) = prostaglandin E2(in). With respect to regulation, tyrosine phosphorylation of the transporter leads to activation of the transport activity. TEA uptake is activated by tyrosine phosphorylation. Inhibited by cGMP, most likely through a cGMP-binding protein that interacts with OCT2. Its function is as follows. Electrogenic voltage-dependent transporter that mediates the transport of a variety of organic cations such as endogenous bioactive amines, cationic drugs and xenobiotics. Functions as a Na(+)-independent, bidirectional uniporter. Cation cellular uptake or release is driven by the electrochemical potential, i.e. membrane potential and concentration gradient. However, may also engage electroneutral cation exchange when saturating concentrations of cation substrates are reached. Predominantly expressed at the basolateral membrane of hepatocytes and proximal tubules and involved in the uptake and disposition of cationic compounds by hepatic and renal clearance from the blood flow. Implicated in monoamine neurotransmitters uptake such as histamine, dopamine, adrenaline/epinephrine, noradrenaline/norepinephrine, serotonin and tyramine, thereby supporting a physiological role in the central nervous system by regulating interstitial concentrations of neurotransmitters. Also capable of transporting dopaminergic neuromodulators cyclo(his-pro), salsolinol and N-methyl-salsolinol, thereby involved in the maintenance of dopaminergic cell integrity in the central nervous system. Mediates the bidirectional transport of acetylcholine (ACh) at the apical membrane of ciliated cell in airway epithelium, thereby playing a role in luminal release of ACh from bronchial epithelium. Also transports guanidine and endogenous monoamines such as vitamin B1/thiamine, creatinine and N-1-methylnicotinamide (NMN). Mediates the uptake and efflux of quaternary ammonium compound choline. Mediates the bidirectional transport of polyamine agmatine and the uptake of polyamines putrescine and spermidine. Able to transport non-amine endogenous compounds such as prostaglandin E2 (PGE2) and prostaglandin F2-alpha (PGF2-alpha). Also involved in the uptake of xenobiotic 4-(4-(dimethylamino)styryl)-N-methylpyridinium (ASP). May contribute to regulate the transport of organic compounds in testis across the blood-testis-barrier. In terms of biological role, in contrast with isoform 1, not able to transport guanidine, creatinine, cimetidine and metformin. The sequence is that of Solute carrier family 22 member 2 from Homo sapiens (Human).